The primary structure comprises 145 residues: MNNNKVYSLNVVSFEKIIFNDFVKKIQVSGSEGELGIYPGHLQLLSLIKPGPLLILDDHDYQHVIYISGGIIEVQPTVVSILADTAIRGLDLDLNVVLDKKLKLENKISNVDCIDRNDVIQQLSCELAKLRVIEMFKNQYIKKNN.

The protein belongs to the ATPase epsilon chain family. F-type ATPases have 2 components, CF(1) - the catalytic core - and CF(0) - the membrane proton channel. CF(1) has five subunits: alpha(3), beta(3), gamma(1), delta(1), epsilon(1). CF(0) has three main subunits: a, b and c.

The protein localises to the cell membrane. Functionally, produces ATP from ADP in the presence of a proton gradient across the membrane. The protein is ATP synthase epsilon chain of Buchnera aphidicola subsp. Baizongia pistaciae (strain Bp).